Here is a 380-residue protein sequence, read N- to C-terminus: Queuine tRNA-ribosyltransferase (380 aa).

Catalysis depends on Asp-93, which acts as the Proton acceptor. Residues 93–97 (DSGGF), Asp-147, Gln-198, and Gly-225 each bind substrate. An RNA binding region spans residues 256 to 262 (GVGLPSN). The Nucleophile role is filled by Asp-275. The RNA binding; important for wobble base 34 recognition stretch occupies residues 280 to 284 (ARNGR). Zn(2+) is bound by residues Cys-313, Cys-315, Cys-318, and His-344.

It belongs to the queuine tRNA-ribosyltransferase family. In terms of assembly, homodimer. Within each dimer, one monomer is responsible for RNA recognition and catalysis, while the other monomer binds to the replacement base PreQ1. Zn(2+) serves as cofactor.

The catalysed reaction is 7-aminomethyl-7-carbaguanine + guanosine(34) in tRNA = 7-aminomethyl-7-carbaguanosine(34) in tRNA + guanine. The protein operates within tRNA modification; tRNA-queuosine biosynthesis. Its function is as follows. Catalyzes the base-exchange of a guanine (G) residue with the queuine precursor 7-aminomethyl-7-deazaguanine (PreQ1) at position 34 (anticodon wobble position) in tRNAs with GU(N) anticodons (tRNA-Asp, -Asn, -His and -Tyr). Catalysis occurs through a double-displacement mechanism. The nucleophile active site attacks the C1' of nucleotide 34 to detach the guanine base from the RNA, forming a covalent enzyme-RNA intermediate. The proton acceptor active site deprotonates the incoming PreQ1, allowing a nucleophilic attack on the C1' of the ribose to form the product. After dissociation, two additional enzymatic reactions on the tRNA convert PreQ1 to queuine (Q), resulting in the hypermodified nucleoside queuosine (7-(((4,5-cis-dihydroxy-2-cyclopenten-1-yl)amino)methyl)-7-deazaguanosine). In Clostridium perfringens (strain ATCC 13124 / DSM 756 / JCM 1290 / NCIMB 6125 / NCTC 8237 / Type A), this protein is Queuine tRNA-ribosyltransferase.